The sequence spans 315 residues: Acetyl-coenzyme A carboxylase carboxyl transferase subunit alpha (315 aa).

Residues 39 to 293 (RLQDKSSTLT…RADLIEQLDM (255 aa)) form the CoA carboxyltransferase C-terminal domain.

Belongs to the AccA family. In terms of assembly, acetyl-CoA carboxylase is a heterohexamer composed of biotin carboxyl carrier protein (AccB), biotin carboxylase (AccC) and two subunits each of ACCase subunit alpha (AccA) and ACCase subunit beta (AccD).

It is found in the cytoplasm. The enzyme catalyses N(6)-carboxybiotinyl-L-lysyl-[protein] + acetyl-CoA = N(6)-biotinyl-L-lysyl-[protein] + malonyl-CoA. The protein operates within lipid metabolism; malonyl-CoA biosynthesis; malonyl-CoA from acetyl-CoA: step 1/1. In terms of biological role, component of the acetyl coenzyme A carboxylase (ACC) complex. First, biotin carboxylase catalyzes the carboxylation of biotin on its carrier protein (BCCP) and then the CO(2) group is transferred by the carboxyltransferase to acetyl-CoA to form malonyl-CoA. This chain is Acetyl-coenzyme A carboxylase carboxyl transferase subunit alpha, found in Pseudomonas entomophila (strain L48).